Consider the following 549-residue polypeptide: Mitochondrial hydroperoxide bicyclase CYP50918A1 (549 aa).

A disordered region spans residues 1–75; sequence MPDAFDVSDD…PQGNRKPAVL (75 aa). Positions 8-26 are enriched in basic and acidic residues; it reads SDDKQLVDQQLTRDSDSKP. The segment covering 27 to 41 has biased composition (low complexity); sequence AAKPASKQKPPSKVP. Cysteine 491 serves as a coordination point for heme. The disordered stretch occupies residues 528–549; sequence DTGDHGPPNGKFSVIKPRQPKH.

It belongs to the cytochrome P450 family. It depends on heme as a cofactor.

Its subcellular location is the mitochondrion. It catalyses the reaction (13S)-hydroperoxy-(9Z,11E,15Z)-octadecatrienoate = plasmodiophorol A. It carries out the reaction (13S)-hydroperoxy-(9Z,11E,15Z)-octadecatrienoate = plasmodiophorol B. Its pathway is lipid metabolism; oxylipin biosynthesis. Its function is as follows. Cytochrome P450 hydroperoxide bicyclase involved in the metabolism of oxylipins natural products such as egregiachlorides, hybridalactone, ecklonialactones and related bicyclic oxylipins. Isomerizes the hydroperoxides into epoxyalcohols via epoxyallylic radical. Can use alpha-linolenic 13-hydroperoxide ((9Z,11E,13S,15Z)-13-hydroperoxy-9,11,15-octadecatrienoic, 13-HPOT) as preferred substrate to produce the heterobicyclic oxylipins plasmodiophorol A (6-oxabicyclo[3.1.0]hexane) and plasmodiophorol B (2-oxabicyclo[2.2.1]heptane) at the ratio 12:1 and a minor product plasmodiophorol C (cyclopentanediol) formed through the hydrolysis of plasmodiophorols A and B and, to a lower extent, active with linoleic acid 13-hydroperoxide ((9Z,11E,13S)-13-hydroperoxy-9,11-octadecadienoic, 13-HPOD), linoleic acid 9-hydroperoxide ((9S,10E,12Z)-9-hydroperoxy-10,12-octadecadienoic, 9-HPOD) and alpha-linolenic 9-hydroperoxide ((9S,10E,12Z,15Z)-9-hydroperoxy-10,12,15-octadecatrienoic, 9-HPOT). This Plasmodiophora brassicae (Clubroot disease agent) protein is Mitochondrial hydroperoxide bicyclase CYP50918A1.